A 331-amino-acid polypeptide reads, in one-letter code: Probable leucine carboxyl methyltransferase 1 (331 aa).

S-adenosyl-L-methionine is bound by residues R82, G107, D131, 179–180, and E206; that span reads DL.

The protein belongs to the methyltransferase superfamily. LCMT family.

The catalysed reaction is [phosphatase 2A protein]-C-terminal L-leucine + S-adenosyl-L-methionine = [phosphatase 2A protein]-C-terminal L-leucine methyl ester + S-adenosyl-L-homocysteine. Its function is as follows. Methylates the carboxyl group of the C-terminal leucine residue of protein phosphatase 2A catalytic subunits to form alpha-leucine ester residues. This is Probable leucine carboxyl methyltransferase 1 from Caenorhabditis briggsae.